We begin with the raw amino-acid sequence, 80 residues long: UPF0154 protein SaurJH1_1431 (80 aa).

The helical transmembrane segment at 4–24 (WLAIIFIVAALILGLIGGFLL) threads the bilayer.

It belongs to the UPF0154 family.

The protein resides in the cell membrane. This chain is UPF0154 protein SaurJH1_1431, found in Staphylococcus aureus (strain JH1).